Consider the following 267-residue polypeptide: Translation initiation factor 2 subunit alpha (267 aa).

Positions 12–83 constitute an S1 motif domain; the sequence is GELVVATVKE…RKKQVDVSLK (72 aa).

It belongs to the eIF-2-alpha family. As to quaternary structure, heterotrimer composed of an alpha, a beta and a gamma chain.

Functionally, eIF-2 functions in the early steps of protein synthesis by forming a ternary complex with GTP and initiator tRNA. In Hyperthermus butylicus (strain DSM 5456 / JCM 9403 / PLM1-5), this protein is Translation initiation factor 2 subunit alpha.